Reading from the N-terminus, the 258-residue chain is UPF0246 protein YaaA (258 aa).

It belongs to the UPF0246 family.

The sequence is that of UPF0246 protein YaaA from Escherichia coli (strain UTI89 / UPEC).